The chain runs to 283 residues: Phosphatidylglycerol--prolipoprotein diacylglyceryl transferase (283 aa).

Helical transmembrane passes span L20–M40, G51–G71, I97–F117, and G123–I143. R145 lines the a 1,2-diacyl-sn-glycero-3-phospho-(1'-sn-glycerol) pocket. A run of 2 helical transmembrane segments spans residues V192 to W212 and I255 to R275.

It belongs to the Lgt family.

It localises to the cell membrane. It carries out the reaction L-cysteinyl-[prolipoprotein] + a 1,2-diacyl-sn-glycero-3-phospho-(1'-sn-glycerol) = an S-1,2-diacyl-sn-glyceryl-L-cysteinyl-[prolipoprotein] + sn-glycerol 1-phosphate + H(+). It functions in the pathway protein modification; lipoprotein biosynthesis (diacylglyceryl transfer). Functionally, catalyzes the transfer of the diacylglyceryl group from phosphatidylglycerol to the sulfhydryl group of the N-terminal cysteine of a prolipoprotein, the first step in the formation of mature lipoproteins. The chain is Phosphatidylglycerol--prolipoprotein diacylglyceryl transferase from Corynebacterium diphtheriae (strain ATCC 700971 / NCTC 13129 / Biotype gravis).